A 177-amino-acid chain; its full sequence is MDLTGPIHDILVVFLGLVLILGGLGVVLFTNPIYSAFSLGLVLICVSLFYILLNSYFVAAAQLLIYVGAINVLILFAVMFMKGSEYSNDLNLWTVGDGVTSLVCTSILFLLISTISDTSWYGIIWTTKANHIIEQDLISNVQQIGIHLSTDFFLPFELISIILLVALIGAISMARQN.

Helical transmembrane passes span 10 to 30 (ILVV…VLFT), 33 to 53 (IYSA…YILL), 61 to 81 (AQLL…VMFM), 92 to 112 (LWTV…FLLI), and 152 to 172 (FFLP…GAIS).

The protein belongs to the complex I subunit 6 family. In terms of assembly, NDH is composed of at least 16 different subunits, 5 of which are encoded in the nucleus.

The protein localises to the plastid. Its subcellular location is the chloroplast thylakoid membrane. It carries out the reaction a plastoquinone + NADH + (n+1) H(+)(in) = a plastoquinol + NAD(+) + n H(+)(out). The enzyme catalyses a plastoquinone + NADPH + (n+1) H(+)(in) = a plastoquinol + NADP(+) + n H(+)(out). NDH shuttles electrons from NAD(P)H:plastoquinone, via FMN and iron-sulfur (Fe-S) centers, to quinones in the photosynthetic chain and possibly in a chloroplast respiratory chain. The immediate electron acceptor for the enzyme in this species is believed to be plastoquinone. Couples the redox reaction to proton translocation, and thus conserves the redox energy in a proton gradient. This chain is NAD(P)H-quinone oxidoreductase subunit 6, chloroplastic (ndhG), found in Lemna minor (Common duckweed).